A 201-amino-acid polypeptide reads, in one-letter code: Large ribosomal subunit protein eL15A (201 aa).

The tract at residues 161–182 is disordered; sequence SRGLTSIGKKSRGIGKGHRFNN. A compositionally biased stretch (basic residues) spans 169–179; the sequence is KKSRGIGKGHR.

Belongs to the eukaryotic ribosomal protein eL15 family. In terms of assembly, component of the large ribosomal subunit (LSU). Mature yeast ribosomes consist of a small (40S) and a large (60S) subunit. The 40S small subunit contains 1 molecule of ribosomal RNA (18S rRNA) and at least 33 different proteins. The large 60S subunit contains 3 rRNA molecules (25S, 5.8S and 5S rRNA) and at least 46 different proteins.

It is found in the cytoplasm. It localises to the nucleus. Its subcellular location is the nucleolus. Its function is as follows. Component of the ribosome, a large ribonucleoprotein complex responsible for the synthesis of proteins in the cell. The small ribosomal subunit (SSU) binds messenger RNAs (mRNAs) and translates the encoded message by selecting cognate aminoacyl-transfer RNA (tRNA) molecules. The large subunit (LSU) contains the ribosomal catalytic site termed the peptidyl transferase center (PTC), which catalyzes the formation of peptide bonds, thereby polymerizing the amino acids delivered by tRNAs into a polypeptide chain. The nascent polypeptides leave the ribosome through a tunnel in the LSU and interact with protein factors that function in enzymatic processing, targeting, and the membrane insertion of nascent chains at the exit of the ribosomal tunnel. The chain is Large ribosomal subunit protein eL15A (rpl15) from Schizosaccharomyces pombe (strain 972 / ATCC 24843) (Fission yeast).